A 153-amino-acid polypeptide reads, in one-letter code: Ribosomal RNA large subunit methyltransferase H (153 aa).

S-adenosyl-L-methionine is bound by residues leucine 70, glycine 102, and 121–126 (LSRMTF).

Belongs to the RNA methyltransferase RlmH family. In terms of assembly, homodimer.

The protein resides in the cytoplasm. The enzyme catalyses pseudouridine(1915) in 23S rRNA + S-adenosyl-L-methionine = N(3)-methylpseudouridine(1915) in 23S rRNA + S-adenosyl-L-homocysteine + H(+). Specifically methylates the pseudouridine at position 1915 (m3Psi1915) in 23S rRNA. This Geotalea uraniireducens (strain Rf4) (Geobacter uraniireducens) protein is Ribosomal RNA large subunit methyltransferase H.